Reading from the N-terminus, the 502-residue chain is Protein MGF 505-5R (502 aa).

Belongs to the asfivirus MGF 505 family.

Its function is as follows. Plays a role in virus cell tropism, and may be required for efficient virus replication in macrophages. In Ornithodoros (relapsing fever ticks), this protein is Protein MGF 505-5R.